Reading from the N-terminus, the 183-residue chain is MSRPLFGGALSAVFPSSVMDISELRQIPDNQEVFAHSQTDQSIIIELLEYQSQVQDADAARYHFEDVAGSNKAIENGTWEVRVVEQVPQSEISMQECSSAWLLSGAQLVSKFNEEAKNTVNVHQCLFRLPQFTTDILMTFNDPVFINPLSSSAAGNMEAIPWTLQDFQGVLQSLRLLDSGVFG.

The segment at 23–66 (ELRQIPDNQEVFAHSQTDQSIIIELLEYQSQVQDADAARYHFED) is interaction with RAN.

It belongs to the MOG1 family. In terms of assembly, monomer. Interacts with ran.

Its subcellular location is the nucleus. The protein localises to the cytoplasm. The protein resides in the perinuclear region. It localises to the cell membrane. May regulate the intracellular trafficking of RAN. Promotes guanine nucleotide release from RAN and inhibits binding of new GTP. Plays a role in the regulation of the levels of GTP-bound RAN in the nucleus. Required for normal expression of the ion channel hcn4 and for normal expression of the cardiac transcription factors nkx2.5, gata4 and hand2 during embryonic development. Required for normal embryonic heart development and normal heart rate. The chain is Ran guanine nucleotide release factor from Danio rerio (Zebrafish).